The primary structure comprises 572 residues: Proline--tRNA ligase (572 aa).

It belongs to the class-II aminoacyl-tRNA synthetase family. ProS type 1 subfamily. In terms of assembly, homodimer.

It localises to the cytoplasm. It carries out the reaction tRNA(Pro) + L-proline + ATP = L-prolyl-tRNA(Pro) + AMP + diphosphate. In terms of biological role, catalyzes the attachment of proline to tRNA(Pro) in a two-step reaction: proline is first activated by ATP to form Pro-AMP and then transferred to the acceptor end of tRNA(Pro). As ProRS can inadvertently accommodate and process non-cognate amino acids such as alanine and cysteine, to avoid such errors it has two additional distinct editing activities against alanine. One activity is designated as 'pretransfer' editing and involves the tRNA(Pro)-independent hydrolysis of activated Ala-AMP. The other activity is designated 'posttransfer' editing and involves deacylation of mischarged Ala-tRNA(Pro). The misacylated Cys-tRNA(Pro) is not edited by ProRS. This chain is Proline--tRNA ligase, found in Salmonella schwarzengrund (strain CVM19633).